Here is a 261-residue protein sequence, read N- to C-terminus: Ribosomal RNA small subunit methyltransferase J (261 aa).

S-adenosyl-L-methionine is bound by residues 109-110, 125-126, and aspartate 179; these read RD and ER.

This sequence belongs to the methyltransferase superfamily. RsmJ family.

It localises to the cytoplasm. The enzyme catalyses guanosine(1516) in 16S rRNA + S-adenosyl-L-methionine = N(2)-methylguanosine(1516) in 16S rRNA + S-adenosyl-L-homocysteine + H(+). In terms of biological role, specifically methylates the guanosine in position 1516 of 16S rRNA. The polypeptide is Ribosomal RNA small subunit methyltransferase J (Pseudomonas aeruginosa (strain LESB58)).